The primary structure comprises 322 residues: Replication factor C small subunit (322 aa).

Residue 46–53 participates in ATP binding; that stretch reads GSAGVGKT.

The protein belongs to the activator 1 small subunits family. RfcS subfamily. Heteromultimer composed of small subunits (RfcS) and large subunits (RfcL).

Part of the RFC clamp loader complex which loads the PCNA sliding clamp onto DNA. The protein is Replication factor C small subunit of Methanoregula boonei (strain DSM 21154 / JCM 14090 / 6A8).